The sequence spans 1722 residues: Lymphocyte antigen 75 (1722 aa).

Residues 1-27 (MRTGWATPRRPAGLLMLLFWFFDLAEP) form the signal peptide. Residues 28–1666 (SGRAANDPFT…VVCKVPLGPD (1639 aa)) lie on the Extracellular side of the membrane. Residues 33–156 (NDPFTIVHGN…ESLCDQPYHE (124 aa)) enclose the Ricin B-type lectin domain. An N-linked (GlcNAc...) asparagine glycan is attached at Asn135. In terms of domain architecture, Fibronectin type-II spans 164 to 211 (SYGRPCEFPFLIDGTWHHDCILDEDHSGPWCATTLNYEYDRKWGICLK). 4 cysteine pairs are disulfide-bonded: Cys169–Cys194, Cys183–Cys209, Cys247–Cys340, and Cys317–Cys332. In terms of domain architecture, C-type lectin 1 spans 225-341 (QFGSCYQFNT…CEAQLPYVCR (117 aa)). N-linked (GlcNAc...) asparagine glycosylation is found at Asn345 and Asn377. 4 C-type lectin domains span residues 368-486 (NNGF…YVCK), 493-625 (NDAS…ICKK), 652-778 (ASLS…IYLR), and 818-931 (IEGS…FICE). 2 disulfides stabilise this stretch: Cys389/Cys485 and Cys462/Cys477. Asn529 carries N-linked (GlcNAc...) asparagine glycosylation. A disulfide bond links Cys597 and Cys614. 2 cysteine pairs are disulfide-bonded: Cys840–Cys930 and Cys904–Cys922. N-linked (GlcNAc...) asparagine glycosylation is found at Asn843 and Asn865. Tyr933 bears the Phosphotyrosine mark. Asn934, Asn1076, and Asn1103 each carry an N-linked (GlcNAc...) asparagine glycan. The region spanning 958-1091 (FQNKCFLKIK…ERHFVSLCQK (134 aa)) is the C-type lectin 6 domain. A disulfide bridge links Cys1060 with Cys1080. The region spanning 1110-1222 (YLNNLYKIIP…DNQPGAICYY (113 aa)) is the C-type lectin 7 domain. Cysteines 1197 and 1211 form a disulfide. N-linked (GlcNAc...) asparagine glycans are attached at residues Asn1225, Asn1320, and Asn1392. Residues 1251 to 1374 (FQNCCYNFII…VIEEAVYFHQ (124 aa)) enclose the C-type lectin 8 domain. C-type lectin domains lie at 1401-1513 (YEDG…ICYK) and 1542-1661 (YKGH…VCKV). Cys1488 and Cys1502 are oxidised to a cystine. N-linked (GlcNAc...) asparagine glycosylation is found at Asn1593 and Asn1626. An intrachain disulfide couples Cys1635 to Cys1650. The helical transmembrane segment at 1667 to 1691 (YTAIAIIVATLSILVLMGGLIWFLF) threads the bilayer. The Cytoplasmic portion of the chain corresponds to 1692-1722 (QRHRLHLAGFSSVRYAQGVNEDEIMLPSFHD). Residues Ser1703 and Ser1719 each carry the phosphoserine modification.

N-glycosylated. In terms of tissue distribution, expressed in spleen, thymus, colon and peripheral blood lymphocytes. Detected in myeloid and B-lymphoid cell lines. Isoform 2 and isoform 3 are expressed in malignant Hodgkin lymphoma cells called Hodgkin and Reed-Sternberg (HRS) cells.

The protein resides in the membrane. Functionally, acts as an endocytic receptor to direct captured antigens from the extracellular space to a specialized antigen-processing compartment. Causes reduced proliferation of B-lymphocytes. The sequence is that of Lymphocyte antigen 75 (LY75) from Homo sapiens (Human).